Consider the following 430-residue polypeptide: von Willebrand factor (430 aa).

Residue asparagine 6 is glycosylated (N-linked (GlcNAc...) asparagine). A disulfide bridge links cysteine 9 with cysteine 12. O-linked (GalNAc...) threonine glycosylation is found at threonine 23, threonine 30, and threonine 31. Cysteine 47 and cysteine 233 form a disulfide bridge. Positions 52-228 (DLVFLLDGSY…DELEQRRDEI (177 aa)) constitute a VWFA 1; binding site for platelet glycoprotein Ib domain. O-linked (GalNAc...) threonine glycosylation occurs at threonine 252. Serine 261 carries an O-linked (GalNAc...) serine glycan. Residues 273–430 (DVVFVLEASD…ITPIFIQDFE (158 aa)) enclose the VWFA 2 domain. 2 N-linked (GlcNAc...) asparagine glycosylation sites follow: asparagine 290 and asparagine 349.

Multimeric. Interacts with F8. Post-translationally, N- and O-glycosylated. In terms of tissue distribution, plasma.

It is found in the secreted. Its subcellular location is the extracellular space. The protein localises to the extracellular matrix. Functionally, important in the maintenance of hemostasis, it promotes adhesion of platelets to the sites of vascular injury by forming a molecular bridge between sub-endothelial collagen matrix and platelet-surface receptor complex GPIb-IX-V. Also acts as a chaperone for coagulation factor VIII, delivering it to the site of injury, stabilizing its heterodimeric structure and protecting it from premature clearance from plasma. This is von Willebrand factor from Rattus norvegicus (Rat).